The following is a 122-amino-acid chain: Large-conductance mechanosensitive channel (122 aa).

The next 2 membrane-spanning stretches (helical) occupy residues 14 to 34 (VLDLAVGVIIGAAFTALVKSL) and 67 to 87 (GAFLNDVINFIITAFVIFILI).

This sequence belongs to the MscL family. As to quaternary structure, homopentamer.

Its subcellular location is the cell membrane. Functionally, channel that opens in response to stretch forces in the membrane lipid bilayer. May participate in the regulation of osmotic pressure changes within the cell. This is Large-conductance mechanosensitive channel from Lactococcus lactis subsp. lactis (strain IL1403) (Streptococcus lactis).